The following is a 554-amino-acid chain: Perforin-1 (554 aa).

A signal peptide spans 1–20 (MAAYLFLLGLFLLLPRPVPA). 3 disulfide bridges follow: Cys-22–Cys-75, Cys-30–Cys-72, and Cys-101–Cys-175. One can recognise an MACPF domain in the interval 26-374 (TRSECKQNHK…HYVMSRARWR (349 aa)). Residues 128–148 (WRAGLDVNPKPEANVHVSVAG) form a beta stranded membrane-spanning segment. The N-linked (GlcNAc...) asparagine glycan is linked to Asn-204. 4 disulfide bridges follow: Cys-241/Cys-407, Cys-376/Cys-392, Cys-380/Cys-394, and Cys-396/Cys-406. A beta stranded transmembrane segment spans residues 256 to 278 (CLSVEAQVSIGAQASVSSEYKAC). The EGF-like domain maps to 375–407 (DCNRPCRAGQHKSSRDSCQCVCQDSNVTNQDCC). Residues 395–513 (VCQDSNVTNQ…FHEVNCPLNH (119 aa)) enclose the C2 domain. Asn-400 is a glycosylation site (N-linked (GlcNAc...) asparagine). Positions 428, 429, 432, 435, 454, 483, 484, 485, 488, 489, 490, and 491 each coordinate Ca(2+). 2 disulfides stabilise this stretch: Cys-496–Cys-509 and Cys-524–Cys-533. Asn-548 carries an N-linked (GlcNAc...) asparagine glycan.

The protein belongs to the complement C6/C7/C8/C9 family. As to quaternary structure, monomer, as soluble protein. Homooligomer; homooligomerizes to form a pore-forming ring. Requires Ca(2+) as cofactor. In terms of processing, N-glycosylated. Detected in large granular lymphocytes and lymphokine-activated killer cells.

The protein localises to the cytolytic granule. The protein resides in the secreted. It localises to the cell membrane. It is found in the endosome lumen. In terms of biological role, pore-forming protein that plays a key role in granzyme-mediated programmed cell death, and in defense against virus-infected or neoplastic cells. Can insert into the membrane of target cells in its calcium-bound form, oligomerize and form large pores. Promotes cytolysis and apoptosis of target cells by mediating the passage and uptake of cytotoxic granzymes. Facilitates the delivery of cationic cargo protein, while anionic or neural proteins are not delivered efficiently. Perforin pores allow the release of mature caspase-7 (CASP7) into the extracellular milieu. The sequence is that of Perforin-1 (Prf1) from Rattus norvegicus (Rat).